Here is a 409-residue protein sequence, read N- to C-terminus: Histidinol dehydrogenase homolog (409 aa).

It belongs to the histidinol dehydrogenase family.

The polypeptide is Histidinol dehydrogenase homolog (Synechocystis sp. (strain ATCC 27184 / PCC 6803 / Kazusa)).